Consider the following 793-residue polypeptide: DNA mismatch repair protein MutS (793 aa).

An ATP-binding site is contributed by 589–596 (GPNMSGKS).

The protein belongs to the DNA mismatch repair MutS family.

In terms of biological role, this protein is involved in the repair of mismatches in DNA. It is possible that it carries out the mismatch recognition step. This protein has a weak ATPase activity. The chain is DNA mismatch repair protein MutS from Thermotoga sp. (strain RQ2).